A 1179-amino-acid chain; its full sequence is DNA-directed RNA polymerase subunit beta' (1179 aa).

Cysteine 60, cysteine 62, cysteine 75, and cysteine 78 together coordinate Zn(2+). Residues aspartate 449, aspartate 451, and aspartate 453 each coordinate Mg(2+). Zn(2+)-binding residues include cysteine 796, cysteine 871, cysteine 878, and cysteine 881.

The protein belongs to the RNA polymerase beta' chain family. The RNAP catalytic core consists of 2 alpha, 1 beta, 1 beta' and 1 omega subunit. When a sigma factor is associated with the core the holoenzyme is formed, which can initiate transcription. Mg(2+) serves as cofactor. It depends on Zn(2+) as a cofactor.

The catalysed reaction is RNA(n) + a ribonucleoside 5'-triphosphate = RNA(n+1) + diphosphate. Functionally, DNA-dependent RNA polymerase catalyzes the transcription of DNA into RNA using the four ribonucleoside triphosphates as substrates. The chain is DNA-directed RNA polymerase subunit beta' from Symbiobacterium thermophilum (strain DSM 24528 / JCM 14929 / IAM 14863 / T).